We begin with the raw amino-acid sequence, 104 residues long: Large ribosomal subunit protein uL24 (104 aa).

The protein belongs to the universal ribosomal protein uL24 family. As to quaternary structure, part of the 50S ribosomal subunit.

In terms of biological role, one of two assembly initiator proteins, it binds directly to the 5'-end of the 23S rRNA, where it nucleates assembly of the 50S subunit. One of the proteins that surrounds the polypeptide exit tunnel on the outside of the subunit. In Methylobacterium radiotolerans (strain ATCC 27329 / DSM 1819 / JCM 2831 / NBRC 15690 / NCIMB 10815 / 0-1), this protein is Large ribosomal subunit protein uL24.